The chain runs to 190 residues: Protein shisa-like-2A (190 aa).

A run of 2 helical transmembrane segments spans residues Ser48–Leu68 and Val70–Ile90.

The protein belongs to the shisa family.

It is found in the membrane. This Homo sapiens (Human) protein is Protein shisa-like-2A.